The primary structure comprises 103 residues: Co-chaperonin GroES (103 aa).

It belongs to the GroES chaperonin family. As to quaternary structure, heptamer of 7 subunits arranged in a ring. Interacts with the chaperonin GroEL.

The protein localises to the cytoplasm. Functionally, together with the chaperonin GroEL, plays an essential role in assisting protein folding. The GroEL-GroES system forms a nano-cage that allows encapsulation of the non-native substrate proteins and provides a physical environment optimized to promote and accelerate protein folding. GroES binds to the apical surface of the GroEL ring, thereby capping the opening of the GroEL channel. The polypeptide is Co-chaperonin GroES (Crocosphaera subtropica (strain ATCC 51142 / BH68) (Cyanothece sp. (strain ATCC 51142))).